Consider the following 584-residue polypeptide: Probable DNA ligase (584 aa).

Glu-248 serves as a coordination point for ATP. Lys-250 acts as the N6-AMP-lysine intermediate in catalysis. ATP contacts are provided by Arg-255, Arg-270, Glu-299, Phe-339, Arg-416, and Lys-422.

It belongs to the ATP-dependent DNA ligase family. Requires Mg(2+) as cofactor.

The enzyme catalyses ATP + (deoxyribonucleotide)n-3'-hydroxyl + 5'-phospho-(deoxyribonucleotide)m = (deoxyribonucleotide)n+m + AMP + diphosphate.. Its function is as follows. DNA ligase that seals nicks in double-stranded DNA during DNA replication, DNA recombination and DNA repair. The chain is Probable DNA ligase from Aquifex aeolicus (strain VF5).